We begin with the raw amino-acid sequence, 252 residues long: 2-succinyl-6-hydroxy-2,4-cyclohexadiene-1-carboxylate synthase (252 aa).

This sequence belongs to the AB hydrolase superfamily. MenH family. As to quaternary structure, monomer.

It carries out the reaction 5-enolpyruvoyl-6-hydroxy-2-succinyl-cyclohex-3-ene-1-carboxylate = (1R,6R)-6-hydroxy-2-succinyl-cyclohexa-2,4-diene-1-carboxylate + pyruvate. The protein operates within quinol/quinone metabolism; 1,4-dihydroxy-2-naphthoate biosynthesis; 1,4-dihydroxy-2-naphthoate from chorismate: step 3/7. It participates in quinol/quinone metabolism; menaquinone biosynthesis. Functionally, catalyzes a proton abstraction reaction that results in 2,5-elimination of pyruvate from 2-succinyl-5-enolpyruvyl-6-hydroxy-3-cyclohexene-1-carboxylate (SEPHCHC) and the formation of 2-succinyl-6-hydroxy-2,4-cyclohexadiene-1-carboxylate (SHCHC). This chain is 2-succinyl-6-hydroxy-2,4-cyclohexadiene-1-carboxylate synthase, found in Escherichia coli O8 (strain IAI1).